Here is a 322-residue protein sequence, read N- to C-terminus: Serine/threonine-protein phosphatase PP1 isozyme 6 (322 aa).

N-acetylmethionine is present on Met1. 4 residues coordinate Mn(2+): Asp61, His63, Asp89, and Asn121. His122 (proton donor) is an active-site residue. The Mn(2+) site is built by His170 and His245. The interval 303-322 (GFNNNVPRPGTPPHKGGKGR) is disordered.

It belongs to the PPP phosphatase family. PP-1 subfamily. Mn(2+) is required as a cofactor. Strongly up-regulated within developing flowers, especially in the tapetum, the developing and mature pollen and in the ovaries.

The protein localises to the nucleus. It is found in the cytoplasm. It carries out the reaction O-phospho-L-seryl-[protein] + H2O = L-seryl-[protein] + phosphate. The enzyme catalyses O-phospho-L-threonyl-[protein] + H2O = L-threonyl-[protein] + phosphate. With respect to regulation, phosphatase activity is strongly reduced by the protein phosphatase inhibitor 2 (I-2). In terms of biological role, serine/threonine-protein phosphatase that possesses phosphatase activity toward para-nitrophenyl phosphate (pNPP) in vitro. This Arabidopsis thaliana (Mouse-ear cress) protein is Serine/threonine-protein phosphatase PP1 isozyme 6.